The primary structure comprises 239 residues: Phospholipase A2 (239 aa).

The N-terminal stretch at 1–19 (MSLIIVLVISVLSADAVLS) is a signal peptide. A propeptide spanning residues 20 to 105 (MDNELYLNLE…GRCLSVGESE (86 aa)) is cleaved from the precursor. Positions 113, 115, and 117 each coordinate Ca(2+). Cystine bridges form between C114–C136, C135–C174, C142–C167, C165–C202, and C207–C217. Residue H139 is part of the active site. D140 contacts Ca(2+). Positions 211-213 (RSP) are excised as a propeptide.

This sequence belongs to the phospholipase A2 family. Group III subfamily. Heterodimer composed of a small subunit and a large subunit; disulfid-linked. The cofactor is Ca(2+). In terms of tissue distribution, expressed by the venom gland.

Its subcellular location is the secreted. It carries out the reaction a 1,2-diacyl-sn-glycero-3-phosphocholine + H2O = a 1-acyl-sn-glycero-3-phosphocholine + a fatty acid + H(+). Toxic phospholipase A2, which may catalyze the calcium-dependent hydrolysis of the 2-acyl groups in 3-sn-phosphoglycerides. Inhibits both skeletal (RYR1) and cardiac (RYR2) ryanodine receptors (calcium release channels). Probably blocks ryanodine receptors by generating a lipid product. This is Phospholipase A2 from Hoffmannihadrurus gertschi (Scorpion).